The primary structure comprises 67 residues: DNA-directed RNA polymerase subunit omega (67 aa).

This sequence belongs to the RNA polymerase subunit omega family. The RNAP catalytic core consists of 2 alpha, 1 beta, 1 beta' and 1 omega subunit. When a sigma factor is associated with the core the holoenzyme is formed, which can initiate transcription.

The catalysed reaction is RNA(n) + a ribonucleoside 5'-triphosphate = RNA(n+1) + diphosphate. Functionally, promotes RNA polymerase assembly. Latches the N- and C-terminal regions of the beta' subunit thereby facilitating its interaction with the beta and alpha subunits. This Moorella thermoacetica (strain ATCC 39073 / JCM 9320) protein is DNA-directed RNA polymerase subunit omega.